The following is a 438-amino-acid chain: uncharacterized protein (438 aa).

This is an uncharacterized protein from Encephalitozoon cuniculi (strain GB-M1) (Microsporidian parasite).